Here is a 136-residue protein sequence, read N- to C-terminus: Small ribosomal subunit protein uS11c (136 aa).

The protein belongs to the universal ribosomal protein uS11 family. As to quaternary structure, part of the 30S ribosomal subunit.

The protein localises to the plastid. The protein resides in the chloroplast. This is Small ribosomal subunit protein uS11c from Guizotia abyssinica (Niger).